Here is a 319-residue protein sequence, read N- to C-terminus: tRNA-cytidine(32) 2-sulfurtransferase (319 aa).

The PP-loop motif motif lies at 49 to 54 (SGGKDS). Cysteine 124, cysteine 127, and cysteine 215 together coordinate [4Fe-4S] cluster. A disordered region spans residues 276-319 (DGDTAFDKEEFRDPAPDADDVEDAPKKRTISILDSRGKESGCGA). Composition is skewed to basic and acidic residues over residues 280-290 (AFDKEEFRDPA) and 310-319 (SRGKESGCGA).

This sequence belongs to the TtcA family. As to quaternary structure, homodimer. Mg(2+) is required as a cofactor. [4Fe-4S] cluster serves as cofactor.

Its subcellular location is the cytoplasm. The catalysed reaction is cytidine(32) in tRNA + S-sulfanyl-L-cysteinyl-[cysteine desulfurase] + AH2 + ATP = 2-thiocytidine(32) in tRNA + L-cysteinyl-[cysteine desulfurase] + A + AMP + diphosphate + H(+). It functions in the pathway tRNA modification. Its function is as follows. Catalyzes the ATP-dependent 2-thiolation of cytidine in position 32 of tRNA, to form 2-thiocytidine (s(2)C32). The sulfur atoms are provided by the cysteine/cysteine desulfurase (IscS) system. The sequence is that of tRNA-cytidine(32) 2-sulfurtransferase from Chromobacterium violaceum (strain ATCC 12472 / DSM 30191 / JCM 1249 / CCUG 213 / NBRC 12614 / NCIMB 9131 / NCTC 9757 / MK).